The following is a 159-amino-acid chain: Ribosome maturation factor RimM (159 aa).

A PRC barrel domain is found at 86-159 (SDAFHLPKLI…IHIETIEGLI (74 aa)).

This sequence belongs to the RimM family. As to quaternary structure, binds ribosomal protein uS19.

Its subcellular location is the cytoplasm. An accessory protein needed during the final step in the assembly of 30S ribosomal subunit, possibly for assembly of the head region. Essential for efficient processing of 16S rRNA. May be needed both before and after RbfA during the maturation of 16S rRNA. It has affinity for free ribosomal 30S subunits but not for 70S ribosomes. This is Ribosome maturation factor RimM from Acholeplasma laidlawii (strain PG-8A).